The primary structure comprises 295 residues: ATP synthase gamma chain (295 aa).

It belongs to the ATPase gamma chain family. F-type ATPases have 2 components, CF(1) - the catalytic core - and CF(0) - the membrane proton channel. CF(1) has five subunits: alpha(3), beta(3), gamma(1), delta(1), epsilon(1). CF(0) has three main subunits: a, b and c.

The protein resides in the cell membrane. Its function is as follows. Produces ATP from ADP in the presence of a proton gradient across the membrane. The gamma chain is believed to be important in regulating ATPase activity and the flow of protons through the CF(0) complex. This is ATP synthase gamma chain from Herpetosiphon aurantiacus (strain ATCC 23779 / DSM 785 / 114-95).